The primary structure comprises 304 residues: Homoserine dehydrogenase (304 aa).

Tyr-8, Asn-10, Val-11, Arg-38, Arg-39, and Ser-73 together coordinate NADP(+). Position 8 (Tyr-8) interacts with NADPH. Val-11 and Arg-38 together coordinate NADPH. Val-11 is an NAD(+) binding site. NADPH is bound by residues Ser-73, Ser-74, Thr-100, and Lys-102. An NAD(+)-binding site is contributed by Ser-73. The NADP(+) site is built by Thr-100 and Lys-102. Residues Val-129 and Thr-133 each contribute to the Na(+) site. 2 residues coordinate NADP(+): Gly-182 and Glu-185. L-homoserine-binding residues include Glu-185 and Asp-196. Catalysis depends on Lys-200, which acts as the Proton donor. Residue Gly-284 participates in NADP(+) binding. Gly-284 lines the NADPH pocket. Gly-284 contacts NAD(+).

This sequence belongs to the homoserine dehydrogenase family. Homodimer. A metal cation is required as a cofactor. In terms of processing, the enzyme is activated by reductive cleavage of the interchain disulfide bond between the two subunits.

It carries out the reaction L-homoserine + NADP(+) = L-aspartate 4-semialdehyde + NADPH + H(+). The catalysed reaction is L-homoserine + NAD(+) = L-aspartate 4-semialdehyde + NADH + H(+). The protein operates within amino-acid biosynthesis; L-methionine biosynthesis via de novo pathway; L-homoserine from L-aspartate: step 3/3. It functions in the pathway amino-acid biosynthesis; L-threonine biosynthesis; L-threonine from L-aspartate: step 3/5. Inhibited by cysteine. Catalyzes the conversion of L-aspartate-beta-semialdehyde (L-Asa) to L-homoserine (L-Hse), the third step in the biosynthesis of threonine and methionine from aspartate. This Sulfurisphaera tokodaii (strain DSM 16993 / JCM 10545 / NBRC 100140 / 7) (Sulfolobus tokodaii) protein is Homoserine dehydrogenase.